The following is a 477-amino-acid chain: tRNA-2-methylthio-N(6)-dimethylallyladenosine synthase (477 aa).

One can recognise an MTTase N-terminal domain in the interval 3 to 120; it reads KKLHIKTWGC…LPAMIKQVQE (118 aa). [4Fe-4S] cluster is bound by residues Cys12, Cys49, Cys83, Cys157, Cys161, and Cys164. Residues 143–375 form the Radical SAM core domain; it reads RAEGATAFVS…QHVINNQSMQ (233 aa). Residues 378-441 form the TRAM domain; it reads RAMLGSTQRI…PNSLRGRFIR (64 aa).

This sequence belongs to the methylthiotransferase family. MiaB subfamily. In terms of assembly, monomer. Requires [4Fe-4S] cluster as cofactor.

Its subcellular location is the cytoplasm. It catalyses the reaction N(6)-dimethylallyladenosine(37) in tRNA + (sulfur carrier)-SH + AH2 + 2 S-adenosyl-L-methionine = 2-methylsulfanyl-N(6)-dimethylallyladenosine(37) in tRNA + (sulfur carrier)-H + 5'-deoxyadenosine + L-methionine + A + S-adenosyl-L-homocysteine + 2 H(+). Catalyzes the methylthiolation of N6-(dimethylallyl)adenosine (i(6)A), leading to the formation of 2-methylthio-N6-(dimethylallyl)adenosine (ms(2)i(6)A) at position 37 in tRNAs that read codons beginning with uridine. The protein is tRNA-2-methylthio-N(6)-dimethylallyladenosine synthase of Aeromonas salmonicida (strain A449).